The primary structure comprises 391 residues: Ribonucleoside-diphosphate reductase small chain (391 aa).

The Fe cation site is built by Asp-135, Glu-166, and His-169. The active site involves Tyr-173. The Fe cation site is built by Glu-229, Glu-263, and His-266.

Belongs to the ribonucleoside diphosphate reductase small chain family. Heterodimer of a large and a small subunit. It depends on Fe cation as a cofactor.

It is found in the nucleus. It localises to the cytoplasm. It catalyses the reaction a 2'-deoxyribonucleoside 5'-diphosphate + [thioredoxin]-disulfide + H2O = a ribonucleoside 5'-diphosphate + [thioredoxin]-dithiol. Functionally, provides the precursors necessary for DNA synthesis. Catalyzes the biosynthesis of deoxyribonucleotides from the corresponding ribonucleotides. This Schizosaccharomyces pombe (strain 972 / ATCC 24843) (Fission yeast) protein is Ribonucleoside-diphosphate reductase small chain (suc22).